A 481-amino-acid chain; its full sequence is Cysteine--tRNA ligase (481 aa).

Cysteine 43 provides a ligand contact to Zn(2+). Positions 45–55 match the 'HIGH' region motif; it reads ATVQGLPHIGH. Cysteine 221, histidine 246, and glutamate 250 together coordinate Zn(2+). A 'KMSKS' region motif is present at residues 277 to 281; that stretch reads KMSKS. Lysine 280 contacts ATP.

It belongs to the class-I aminoacyl-tRNA synthetase family. Monomer. Requires Zn(2+) as cofactor.

The protein resides in the cytoplasm. The enzyme catalyses tRNA(Cys) + L-cysteine + ATP = L-cysteinyl-tRNA(Cys) + AMP + diphosphate. This is Cysteine--tRNA ligase from Mycobacterium sp. (strain KMS).